The chain runs to 81 residues: Putative membrane protein insertion efficiency factor (81 aa).

A disordered region spans residues 61-81; it reads NDGGYDPVPPAPSSRTSSIAE.

This sequence belongs to the UPF0161 family.

Its subcellular location is the cell inner membrane. In terms of biological role, could be involved in insertion of integral membrane proteins into the membrane. This Pseudomonas putida (strain ATCC 47054 / DSM 6125 / CFBP 8728 / NCIMB 11950 / KT2440) protein is Putative membrane protein insertion efficiency factor.